The chain runs to 250 residues: Functional amyloid sbunit FapE (250 aa).

The signal sequence occupies residues 1-27 (MLREHAMYTHHCFVLACCLGAALPAPA).

The protein belongs to the FapE family. As to quaternary structure, a minor component of purified amyloid fibrils. Fibrils are resistant to boiling in 2% (weight/vol) SDS and require &gt;90% (vol/vol) formic acid to dissolve.

It is found in the fimbrium. Its subcellular location is the secreted. A minor component of the functional amyloid in this bacterium. Upon overexpression of the endogenous six-gene locus (fapA-fapF), cells form large clumps during liquid growth, make large amounts of biofilm and produce amyloid fibrils. The protein is Functional amyloid sbunit FapE of Pseudomonas aeruginosa (strain ATCC 15692 / DSM 22644 / CIP 104116 / JCM 14847 / LMG 12228 / 1C / PRS 101 / PAO1).